The sequence spans 428 residues: Histidine--tRNA ligase (428 aa).

The protein belongs to the class-II aminoacyl-tRNA synthetase family. In terms of assembly, homodimer.

Its subcellular location is the cytoplasm. It carries out the reaction tRNA(His) + L-histidine + ATP = L-histidyl-tRNA(His) + AMP + diphosphate + H(+). The protein is Histidine--tRNA ligase of Chlamydia trachomatis serovar L2 (strain ATCC VR-902B / DSM 19102 / 434/Bu).